We begin with the raw amino-acid sequence, 364 residues long: Protein LATERAL BRANCHING OXIDOREDUCTASE 1 (364 aa).

The Fe2OG dioxygenase domain maps to arginine 203–proline 312. Fe cation is bound by residues histidine 235, aspartate 237, and histidine 293. Arginine 303 is a 2-oxoglutarate binding site.

Belongs to the iron/ascorbate-dependent oxidoreductase family. As to quaternary structure, monomer. Fe(2+) is required as a cofactor. Requires L-ascorbate as cofactor. As to expression, expressed in the vasculature throughout the plant and in the buds and root tips.

Its subcellular location is the cytoplasm. It carries out the reaction (11R)-methyl carlactonoate + 2-oxoglutarate + O2 = (11R)-hydroxymethyl carlactonoate + succinate + CO2. In terms of biological role, oxoglutarate-dependent dioxygenase involved in the biosynthesis of strigolactone natural products, bioactive compounds promoting plant fitness and soil microbe interactions, but preventing shoot branching. Catalyzes the hydroxylation of (11R)-methyl carlactonoate (MeCLA) to produce (11R)-hydroxymethyl carlactonoate (1'-HO-MeCLA) in final stages of strigolactone biosynthesis, downstream of MAX1 and CLAMT. This is Protein LATERAL BRANCHING OXIDOREDUCTASE 1 from Arabidopsis thaliana (Mouse-ear cress).